The chain runs to 168 residues: Phosphopantetheine adenylyltransferase (168 aa).

T10 lines the substrate pocket. ATP contacts are provided by residues 10–11 (TF) and H18. The substrate site is built by K42, L74, and R88. ATP-binding positions include 89–91 (GLR), E99, and 124–130 (NSFISST).

The protein belongs to the bacterial CoaD family. In terms of assembly, homohexamer. Mg(2+) is required as a cofactor.

It localises to the cytoplasm. The enzyme catalyses (R)-4'-phosphopantetheine + ATP + H(+) = 3'-dephospho-CoA + diphosphate. It participates in cofactor biosynthesis; coenzyme A biosynthesis; CoA from (R)-pantothenate: step 4/5. Functionally, reversibly transfers an adenylyl group from ATP to 4'-phosphopantetheine, yielding dephospho-CoA (dPCoA) and pyrophosphate. The chain is Phosphopantetheine adenylyltransferase from Shewanella frigidimarina (strain NCIMB 400).